A 266-amino-acid chain; its full sequence is tRNA pseudouridine synthase A (266 aa).

Asp-56 acts as the Nucleophile in catalysis. Tyr-110 provides a ligand contact to substrate.

It belongs to the tRNA pseudouridine synthase TruA family.

It carries out the reaction uridine(38/39/40) in tRNA = pseudouridine(38/39/40) in tRNA. In terms of biological role, formation of pseudouridine at positions 38, 39 and 40 in the anticodon stem and loop of transfer RNAs. This is tRNA pseudouridine synthase A from Halobacterium salinarum (strain ATCC 29341 / DSM 671 / R1).